Reading from the N-terminus, the 637-residue chain is tRNA 5-methylaminomethyl-2-thiouridine biosynthesis bifunctional protein MnmC (637 aa).

A tRNA (mnm(5)s(2)U34)-methyltransferase region spans residues 1 to 231; that stretch reads MPIDPARLAF…KRQMCRGRHR (231 aa). Residues 250–637 are FAD-dependent cmnm(5)s(2)U34 oxidoreductase; the sequence is IGAGLAGSST…RPARGMTREG (388 aa).

In the N-terminal section; belongs to the methyltransferase superfamily. tRNA (mnm(5)s(2)U34)-methyltransferase family. It in the C-terminal section; belongs to the DAO family. FAD serves as cofactor.

It is found in the cytoplasm. It carries out the reaction 5-aminomethyl-2-thiouridine(34) in tRNA + S-adenosyl-L-methionine = 5-methylaminomethyl-2-thiouridine(34) in tRNA + S-adenosyl-L-homocysteine + H(+). Functionally, catalyzes the last two steps in the biosynthesis of 5-methylaminomethyl-2-thiouridine (mnm(5)s(2)U) at the wobble position (U34) in tRNA. Catalyzes the FAD-dependent demodification of cmnm(5)s(2)U34 to nm(5)s(2)U34, followed by the transfer of a methyl group from S-adenosyl-L-methionine to nm(5)s(2)U34, to form mnm(5)s(2)U34. This Aromatoleum aromaticum (strain DSM 19018 / LMG 30748 / EbN1) (Azoarcus sp. (strain EbN1)) protein is tRNA 5-methylaminomethyl-2-thiouridine biosynthesis bifunctional protein MnmC.